The primary structure comprises 90 residues: Small ribosomal subunit protein uS15c (90 aa).

This sequence belongs to the universal ribosomal protein uS15 family. As to quaternary structure, part of the 30S ribosomal subunit.

It is found in the plastid. It localises to the chloroplast. The protein is Small ribosomal subunit protein uS15c (rps15) of Panax ginseng (Korean ginseng).